A 66-amino-acid polypeptide reads, in one-letter code: Large ribosomal subunit protein bL31 (66 aa).

Residues C16, C18, C36, and C39 each coordinate Zn(2+).

This sequence belongs to the bacterial ribosomal protein bL31 family. Type A subfamily. As to quaternary structure, part of the 50S ribosomal subunit. It depends on Zn(2+) as a cofactor.

Binds the 23S rRNA. The sequence is that of Large ribosomal subunit protein bL31 from Moorella thermoacetica (strain ATCC 39073 / JCM 9320).